A 423-amino-acid polypeptide reads, in one-letter code: 3-phosphoshikimate 1-carboxyvinyltransferase (423 aa).

Residues K21, S22, and R26 each coordinate 3-phosphoshikimate. Residue K21 coordinates phosphoenolpyruvate. 2 residues coordinate phosphoenolpyruvate: G92 and R120. The 3-phosphoshikimate site is built by S166, Q168, S194, D310, and K337. Q168 contacts phosphoenolpyruvate. The active-site Proton acceptor is D310. Residues R341, R384, and K409 each contribute to the phosphoenolpyruvate site.

The protein belongs to the EPSP synthase family. Monomer.

It is found in the cytoplasm. It carries out the reaction 3-phosphoshikimate + phosphoenolpyruvate = 5-O-(1-carboxyvinyl)-3-phosphoshikimate + phosphate. The protein operates within metabolic intermediate biosynthesis; chorismate biosynthesis; chorismate from D-erythrose 4-phosphate and phosphoenolpyruvate: step 6/7. In terms of biological role, catalyzes the transfer of the enolpyruvyl moiety of phosphoenolpyruvate (PEP) to the 5-hydroxyl of shikimate-3-phosphate (S3P) to produce enolpyruvyl shikimate-3-phosphate and inorganic phosphate. The protein is 3-phosphoshikimate 1-carboxyvinyltransferase of Syntrophobacter fumaroxidans (strain DSM 10017 / MPOB).